A 322-amino-acid chain; its full sequence is Helix-loop-helix 34 (322 aa).

Residues 1–11 show a composition bias toward basic and acidic residues; it reads METNLSEEKQK. The disordered stretch occupies residues 1-23; that stretch reads METNLSEEKQKPSKSQAQQRRQM. The bHLH domain maps to 8–62; that stretch reads EKQKPSKSQAQQRRQMENYEFSQLANELPLARAISGQHIDKTTMVRLATAYIKLH. 2 PAS domains span residues 82-152 and 203-276; these read DSLW…DLNW and PTPV…FNLG.

Efficient DNA binding requires dimerization with another bHLH protein. As to expression, expressed in a small subset of neurons, probably AVJL and AVJR. Expressed in the AVH neurons.

It is found in the nucleus. Transcription factor. Involved in specifying AVH neuron identity, acting in concert with unc-42. Involved in serotonin-mediated feeding behavior, probably acting by modulating expression of genes involved in glutamate signaling. The polypeptide is Helix-loop-helix 34 (hlh-34) (Caenorhabditis elegans).